Reading from the N-terminus, the 95-residue chain is FMRFamide-like neuropeptides 16 (95 aa).

Positions 1–24 (MSLSGFEFSSIIAVLLLLIQLSSA) are cleaved as a signal peptide. The propeptide occupies 25–58 (AVLPVDYASQYGVASADEMTALPEEGSLFAERPA). 3 positions are modified to phenylalanine amide: phenylalanine 67, phenylalanine 77, and phenylalanine 87. A propeptide spanning residues 90–95 (SAPFEQ) is cleaved from the precursor.

This sequence belongs to the FARP (FMRFamide related peptide) family.

Its subcellular location is the secreted. FMRFamides and FMRFamide-like peptides are neuropeptides. AQTFVRF-amide inhibits the activity of dissected pharyngeal myogenic muscle system. The sequence is that of FMRFamide-like neuropeptides 16 (flp-16) from Caenorhabditis briggsae.